The following is a 386-amino-acid chain: Nucleosome assembly protein 1-like 4 (386 aa).

A disordered region spans residues 1–28; sequence MAENSLSDGGPADSVEAAKNASNTEKLT. Position 2 is an N-acetylalanine (Ala-2). Residues Ser-5, Ser-7, and Ser-49 each carry the phosphoserine modification. Position 51 is a phosphothreonine (Thr-51). 2 positions are modified to phosphoserine: Ser-53 and Ser-54. Thr-58 is modified (phosphothreonine). Lys-105 bears the N6-acetyllysine mark. Phosphoserine is present on Ser-125. Lys-146 is subject to N6-acetyllysine. The short motif at 265–271 is the Nuclear localization signal element; sequence IKKKQKH. A Phosphoserine modification is found at Ser-304. Positions 339–370 are enriched in acidic residues; sequence AIEDDDNFEEGEEGEEEELEGDEEGEDEDDAD. The tract at residues 339–386 is disordered; it reads AIEDDDNFEEGEEGEEEELEGDEEGEDEDDADVNPKKEPIQPAECKQQ.

It belongs to the nucleosome assembly protein (NAP) family. In terms of assembly, interacts with core (H2A, H2B, H3, H4) and linker (H1) histones. In terms of processing, polyglutamylated and polyglycylated. These 2 modifications occur exclusively on glutamate residues and result in either polyglutamate or polyglycine chains on the gamma-carboxyl group. Both modifications can coexist on the same protein on adjacent residues, and lowering polyglycylation levels increases polyglutamylation, and reciprocally. Polyglutamylated by TTLL4. Post-translationally, phosphorylated at the G0/G1 boundary but it is not phosphorylated in S-phase. Phosphorylated protein remains in the cytoplasm in a complex with histones during the G0/G1 transition, whereas dephosphorylation triggers its transport into the nucleus at the G1/S-boundary.

The protein resides in the nucleus. It localises to the cytoplasm. In terms of biological role, acts as a histone chaperone in nucleosome assembly. The sequence is that of Nucleosome assembly protein 1-like 4 (Nap1l4) from Rattus norvegicus (Rat).